The following is a 316-amino-acid chain: L-lactate dehydrogenase (316 aa).

NAD(+) is bound by residues valine 16, aspartate 37, lysine 42, tyrosine 68, and 82–83; that span reads GA. Residues glutamine 85 and arginine 91 each contribute to the substrate site. NAD(+) is bound by residues serine 104, 121 to 123, and serine 146; that span reads AAN. Residue 123 to 126 participates in substrate binding; it reads NPVD. 151–154 lines the substrate pocket; it reads DSAR. Beta-D-fructose 1,6-bisphosphate contacts are provided by arginine 156 and histidine 171. Histidine 178 (proton acceptor) is an active-site residue. Tyrosine 222 bears the Phosphotyrosine mark. Threonine 231 is a substrate binding site.

The protein belongs to the LDH/MDH superfamily. LDH family. As to quaternary structure, homotetramer.

It localises to the cytoplasm. It carries out the reaction (S)-lactate + NAD(+) = pyruvate + NADH + H(+). It participates in fermentation; pyruvate fermentation to lactate; (S)-lactate from pyruvate: step 1/1. Its activity is regulated as follows. Allosterically activated by fructose 1,6-bisphosphate (FBP). Its function is as follows. Catalyzes the conversion of lactate to pyruvate. The chain is L-lactate dehydrogenase from Staphylococcus epidermidis (strain ATCC 12228 / FDA PCI 1200).